We begin with the raw amino-acid sequence, 313 residues long: Carbamate kinase 2 (313 aa).

Belongs to the carbamate kinase family.

It is found in the cytoplasm. It carries out the reaction hydrogencarbonate + NH4(+) + ATP = carbamoyl phosphate + ADP + H2O + H(+). It functions in the pathway metabolic intermediate metabolism; carbamoyl phosphate degradation; CO(2) and NH(3) from carbamoyl phosphate: step 1/1. The protein is Carbamate kinase 2 (arcC2) of Staphylococcus aureus (strain USA300).